A 261-amino-acid chain; its full sequence is Imidazole glycerol phosphate synthase subunit HisF (261 aa).

Residues aspartate 12 and aspartate 131 contribute to the active site.

It belongs to the HisA/HisF family. As to quaternary structure, heterodimer of HisH and HisF.

The protein localises to the cytoplasm. The catalysed reaction is 5-[(5-phospho-1-deoxy-D-ribulos-1-ylimino)methylamino]-1-(5-phospho-beta-D-ribosyl)imidazole-4-carboxamide + L-glutamine = D-erythro-1-(imidazol-4-yl)glycerol 3-phosphate + 5-amino-1-(5-phospho-beta-D-ribosyl)imidazole-4-carboxamide + L-glutamate + H(+). It participates in amino-acid biosynthesis; L-histidine biosynthesis; L-histidine from 5-phospho-alpha-D-ribose 1-diphosphate: step 5/9. IGPS catalyzes the conversion of PRFAR and glutamine to IGP, AICAR and glutamate. The HisF subunit catalyzes the cyclization activity that produces IGP and AICAR from PRFAR using the ammonia provided by the HisH subunit. The protein is Imidazole glycerol phosphate synthase subunit HisF of Brucella abortus (strain S19).